Reading from the N-terminus, the 337-residue chain is Putative high mobility group B protein 11 (337 aa).

Positions 34-125 constitute an ARID domain; the sequence is VRNPELFWEM…MLFEFEHLYY (92 aa). Disordered regions lie at residues 197–221 and 298–337; these read TKRGKKKAKSSQGDSHKPPKRQRTG and AGTSASAAETADEASQENLAKTDACTSASSAAETEDEVSQ. A DNA-binding region (HMG box) is located at residues 215 to 282; the sequence is PKRQRTGYNF…RYKMEILQYR (68 aa). Low complexity predominate over residues 319–329; it reads TDACTSASSAA.

This sequence belongs to the HMGB family.

It is found in the nucleus. Functionally, binds preferentially DNA with A/T-rich content. The polypeptide is Putative high mobility group B protein 11 (HMGB11) (Arabidopsis thaliana (Mouse-ear cress)).